The primary structure comprises 471 residues: V-type ATP synthase beta chain (471 aa).

It belongs to the ATPase alpha/beta chains family.

In terms of biological role, produces ATP from ADP in the presence of a proton gradient across the membrane. The V-type beta chain is a regulatory subunit. This chain is V-type ATP synthase beta chain (atpB), found in Deinococcus radiodurans (strain ATCC 13939 / DSM 20539 / JCM 16871 / CCUG 27074 / LMG 4051 / NBRC 15346 / NCIMB 9279 / VKM B-1422 / R1).